Reading from the N-terminus, the 178-residue chain is Large ribosomal subunit protein uL6 (178 aa).

It belongs to the universal ribosomal protein uL6 family. As to quaternary structure, part of the 50S ribosomal subunit.

Functionally, this protein binds to the 23S rRNA, and is important in its secondary structure. It is located near the subunit interface in the base of the L7/L12 stalk, and near the tRNA binding site of the peptidyltransferase center. This chain is Large ribosomal subunit protein uL6, found in Arthrobacter sp. (strain FB24).